We begin with the raw amino-acid sequence, 178 residues long: Large ribosomal subunit protein uL6 (178 aa).

It belongs to the universal ribosomal protein uL6 family. As to quaternary structure, part of the 50S ribosomal subunit.

Functionally, this protein binds to the 23S rRNA, and is important in its secondary structure. It is located near the subunit interface in the base of the L7/L12 stalk, and near the tRNA binding site of the peptidyltransferase center. In Shouchella clausii (strain KSM-K16) (Alkalihalobacillus clausii), this protein is Large ribosomal subunit protein uL6.